A 116-amino-acid chain; its full sequence is Classical arabinogalactan protein 25 (116 aa).

A signal peptide spans 1-28; sequence MAFSFLNKLLIIFIFIFISLSSSSPTIS. Residues 40-95 are disordered; it reads LLPSPGDALPSDDGSGTIPSSPSPPDPDTNDGSYPDPLAFSPFASPPVSSPSPPPS. Composition is skewed to low complexity over residues 50 to 59 and 69 to 82; these read SDDGSGTIPS and NDGSYPDPLAFSPF. The span at 83–95 shows a compositional bias: pro residues; the sequence is ASPPVSSPSPPPS. Residue Ser-89 is the site of GPI-anchor amidated serine attachment. Positions 90–116 are cleaved as a propeptide — removed in mature form; that stretch reads PSPPPSLPSAGVLLISLIISSASFLAL.

This sequence belongs to the classical AGP family. O-glycosylated on the hydroxyproline residues.

It is found in the cell membrane. Proteoglycan that seems to be implicated in diverse developmental roles such as differentiation, cell-cell recognition, embryogenesis and programmed cell death. The sequence is that of Classical arabinogalactan protein 25 (AGP25) from Arabidopsis thaliana (Mouse-ear cress).